The primary structure comprises 115 residues: MSVANEVTQLTPTYAPAENASEPTVFSVPIVAFPKAYEYDQQWAVGLIVAGMMKQAKYRRYAYPFVETFVQLKEPYRQYKYRNALKGANAWLTWFNKFEVPALHRLGRMNINKTK.

This is an uncharacterized protein from Acidianus sp. F28 (AFV-2).